A 409-amino-acid polypeptide reads, in one-letter code: Homoserine O-succinyltransferase (409 aa).

The AB hydrolase-1 domain occupies 43–380; sequence NAIVVCHALN…PHGHDAFLLD (338 aa). The active-site Nucleophile is the serine 149. Position 219 (arginine 219) interacts with substrate. The disordered stretch occupies residues 244–268; the sequence is TLPAARGSLPPEGTDPTRGGPASDR. Active-site residues include aspartate 341 and histidine 374. Position 375 (aspartate 375) interacts with substrate.

The protein belongs to the AB hydrolase superfamily. MetX family. As to quaternary structure, homodimer.

It is found in the cytoplasm. It carries out the reaction L-homoserine + succinyl-CoA = O-succinyl-L-homoserine + CoA. It participates in amino-acid biosynthesis; L-methionine biosynthesis via de novo pathway; O-succinyl-L-homoserine from L-homoserine: step 1/1. Its function is as follows. Transfers a succinyl group from succinyl-CoA to L-homoserine, forming succinyl-L-homoserine. This chain is Homoserine O-succinyltransferase, found in Comamonas testosteroni (strain DSM 14576 / KF-1) (Pseudomonas testosteroni).